The following is a 209-amino-acid chain: Kynurenine formamidase (209 aa).

Substrate is bound at residue Trp20. Positions 50, 54, and 56 each coordinate Zn(2+). Residue His60 is the Proton donor/acceptor of the active site. Zn(2+)-binding residues include His161 and Glu173.

Belongs to the Cyclase 1 superfamily. KynB family. In terms of assembly, homodimer. Zn(2+) is required as a cofactor.

It carries out the reaction N-formyl-L-kynurenine + H2O = L-kynurenine + formate + H(+). It functions in the pathway amino-acid degradation; L-tryptophan degradation via kynurenine pathway; L-kynurenine from L-tryptophan: step 2/2. Functionally, catalyzes the hydrolysis of N-formyl-L-kynurenine to L-kynurenine, the second step in the kynurenine pathway of tryptophan degradation. The sequence is that of Kynurenine formamidase from Bacillus mycoides (strain KBAB4) (Bacillus weihenstephanensis).